The primary structure comprises 104 residues: Large ribosomal subunit protein bL21 (104 aa).

The protein belongs to the bacterial ribosomal protein bL21 family. Part of the 50S ribosomal subunit. Contacts protein L20.

Functionally, this protein binds to 23S rRNA in the presence of protein L20. The protein is Large ribosomal subunit protein bL21 of Francisella tularensis subsp. holarctica (strain FTNF002-00 / FTA).